The primary structure comprises 79 residues: U1-plectoxin-Pt1c (79 aa).

The signal sequence occupies residues 1-18; the sequence is HLILASALICALVVCTFA. Positions 19-31 are excised as a propeptide; it reads EEQVNVPFLPDER. 5 disulfide bridges follow: C35–C49, C42–C55, C48–C66, C52–C75, and C57–C64. Residues 78–79 constitute a propeptide that is removed on maturation; it reads RR.

Belongs to the neurotoxin 02 (plectoxin) family. 02 (plectoxin) subfamily. In terms of tissue distribution, expressed by the venom gland.

Its subcellular location is the secreted. Potent toxin that may paralyze and/or kill insect pests such as H.virescens (lepidoptera), S.exigua (beet armyworm) and M.sexta (tobacco hornworm). The polypeptide is U1-plectoxin-Pt1c (Plectreurys tristis (Spider)).